The following is a 939-amino-acid chain: Isoleucine--tRNA ligase (939 aa).

A 'HIGH' region motif is present at residues 58-68 (PYANGDIHIGH). Residue glutamate 574 coordinates L-isoleucyl-5'-AMP. The 'KMSKS' region motif lies at 615–619 (KMSKS). Residue lysine 618 participates in ATP binding. Zn(2+) is bound by residues cysteine 902, cysteine 905, cysteine 922, and cysteine 925.

Belongs to the class-I aminoacyl-tRNA synthetase family. IleS type 1 subfamily. In terms of assembly, monomer. The cofactor is Zn(2+).

Its subcellular location is the cytoplasm. It carries out the reaction tRNA(Ile) + L-isoleucine + ATP = L-isoleucyl-tRNA(Ile) + AMP + diphosphate. Its function is as follows. Catalyzes the attachment of isoleucine to tRNA(Ile). As IleRS can inadvertently accommodate and process structurally similar amino acids such as valine, to avoid such errors it has two additional distinct tRNA(Ile)-dependent editing activities. One activity is designated as 'pretransfer' editing and involves the hydrolysis of activated Val-AMP. The other activity is designated 'posttransfer' editing and involves deacylation of mischarged Val-tRNA(Ile). The polypeptide is Isoleucine--tRNA ligase (Aromatoleum aromaticum (strain DSM 19018 / LMG 30748 / EbN1) (Azoarcus sp. (strain EbN1))).